The sequence spans 147 residues: Large ribosomal subunit protein bL9 (147 aa).

Belongs to the bacterial ribosomal protein bL9 family.

In terms of biological role, binds to the 23S rRNA. In Clostridium tetani (strain Massachusetts / E88), this protein is Large ribosomal subunit protein bL9.